Here is a 181-residue protein sequence, read N- to C-terminus: Crossover junction endodeoxyribonuclease RuvC (181 aa).

Residues D7, E67, and D139 contribute to the active site. D7, E67, and D139 together coordinate Mg(2+).

The protein belongs to the RuvC family. As to quaternary structure, homodimer which binds Holliday junction (HJ) DNA. The HJ becomes 2-fold symmetrical on binding to RuvC with unstacked arms; it has a different conformation from HJ DNA in complex with RuvA. In the full resolvosome a probable DNA-RuvA(4)-RuvB(12)-RuvC(2) complex forms which resolves the HJ. The cofactor is Mg(2+).

It is found in the cytoplasm. It catalyses the reaction Endonucleolytic cleavage at a junction such as a reciprocal single-stranded crossover between two homologous DNA duplexes (Holliday junction).. The RuvA-RuvB-RuvC complex processes Holliday junction (HJ) DNA during genetic recombination and DNA repair. Endonuclease that resolves HJ intermediates. Cleaves cruciform DNA by making single-stranded nicks across the HJ at symmetrical positions within the homologous arms, yielding a 5'-phosphate and a 3'-hydroxyl group; requires a central core of homology in the junction. The consensus cleavage sequence is 5'-(A/T)TT(C/G)-3'. Cleavage occurs on the 3'-side of the TT dinucleotide at the point of strand exchange. HJ branch migration catalyzed by RuvA-RuvB allows RuvC to scan DNA until it finds its consensus sequence, where it cleaves and resolves the cruciform DNA. The polypeptide is Crossover junction endodeoxyribonuclease RuvC (Ralstonia nicotianae (strain ATCC BAA-1114 / GMI1000) (Ralstonia solanacearum)).